Consider the following 397-residue polypeptide: Acetate kinase (397 aa).

Asparagine 7 lines the Mg(2+) pocket. Lysine 14 lines the ATP pocket. Arginine 90 is a binding site for substrate. The active-site Proton donor/acceptor is aspartate 147. ATP contacts are provided by residues 207–211, 282–284, and 330–334; these read HLGNG, DFR, and GIGEN. Glutamate 384 contributes to the Mg(2+) binding site.

This sequence belongs to the acetokinase family. As to quaternary structure, homodimer. Mg(2+) is required as a cofactor. Requires Mn(2+) as cofactor.

The protein localises to the cytoplasm. It carries out the reaction acetate + ATP = acetyl phosphate + ADP. It participates in metabolic intermediate biosynthesis; acetyl-CoA biosynthesis; acetyl-CoA from acetate: step 1/2. Functionally, catalyzes the formation of acetyl phosphate from acetate and ATP. Can also catalyze the reverse reaction. This chain is Acetate kinase, found in Agathobacter rectalis (strain ATCC 33656 / DSM 3377 / JCM 17463 / KCTC 5835 / VPI 0990) (Eubacterium rectale).